The sequence spans 84 residues: Dolichol phosphate-mannose biosynthesis regulatory protein (84 aa).

2 consecutive transmembrane segments (helical) span residues 11–31 (FGLVAVSLIIFTYYTTWVILL) and 49–69 (YAVLLPLAAGLLLLLFVGLFI).

The protein belongs to the DPM2 family. Component of the dolichol-phosphate mannose (DPM) synthase complex composed of DPM1, DPM2 and DPM3; in the complex interacts directly with DPM3. Component of the glycosylphosphatidylinositol-N-acetylglucosaminyltransferase (GPI-GnT) complex composed at least by PIGA, PIGC, PIGH, PIGP, PIGQ, PIGY and DPM2. Interacts with PIGA, PIGC and PIGQ.

It localises to the endoplasmic reticulum membrane. Its pathway is protein modification; protein glycosylation. In terms of biological role, regulates the biosynthesis of dolichol phosphate-mannose. Regulatory subunit of the dolichol-phosphate mannose (DPM) synthase complex; essential for the ER localization and stable expression of DPM1. Part of the glycosylphosphatidylinositol-N-acetylglucosaminyltransferase (GPI-GnT) complex that catalyzes the transfer of N-acetylglucosamine from UDP-N-acetylglucosamine to phosphatidylinositol and participates in the first step of GPI biosynthesis. May act by regulating the GPI-GNT complex. The protein is Dolichol phosphate-mannose biosynthesis regulatory protein of Mus musculus (Mouse).